A 468-amino-acid polypeptide reads, in one-letter code: 6-phosphogluconate dehydrogenase, decarboxylating (468 aa).

NADP(+)-binding positions include 9–14, 32–34, 73–75, and asparagine 101; these read GLAVMG, NRS, and VQA. Residues asparagine 101 and 127–129 contribute to the substrate site; that span reads SGG. The active-site Proton acceptor is the lysine 182. A substrate-binding site is contributed by 185 to 186; sequence HN. Residue glutamate 189 is the Proton donor of the active site. Residues tyrosine 190, lysine 259, arginine 286, arginine 444, and histidine 450 each contribute to the substrate site.

This sequence belongs to the 6-phosphogluconate dehydrogenase family. In terms of assembly, homodimer.

The enzyme catalyses 6-phospho-D-gluconate + NADP(+) = D-ribulose 5-phosphate + CO2 + NADPH. It functions in the pathway carbohydrate degradation; pentose phosphate pathway; D-ribulose 5-phosphate from D-glucose 6-phosphate (oxidative stage): step 3/3. Functionally, catalyzes the oxidative decarboxylation of 6-phosphogluconate to ribulose 5-phosphate and CO(2), with concomitant reduction of NADP to NADPH. The polypeptide is 6-phosphogluconate dehydrogenase, decarboxylating (gnd) (Staphylococcus aureus (strain COL)).